The primary structure comprises 681 residues: UvrABC system protein B (681 aa).

Residues 32 to 419 form the Helicase ATP-binding domain; the sequence is ARLSRGERDV…GGEYVEQVIR (388 aa). 45 to 52 contacts ATP; sequence GATGTGKS. The Beta-hairpin signature appears at 98–121; the sequence is YYDYYQPEAYIAQTDTYIEKDSSI. The 167-residue stretch at 436–602 folds into the Helicase C-terminal domain; sequence QIDDLIHEIK…PLRKKIADIL (167 aa). Over residues 607–616 the composition is skewed to polar residues; it reads ESKAESTAPS. Residues 607 to 626 form a disordered region; that stretch reads ESKAESTAPSSDAVVVSKTN. In terms of domain architecture, UVR spans 636-671; that stretch reads RSLIDDLTTQMGTAARELKFELAGRLRDEIAELKKE.

It belongs to the UvrB family. As to quaternary structure, forms a heterotetramer with UvrA during the search for lesions. Interacts with UvrC in an incision complex.

The protein localises to the cytoplasm. Its function is as follows. The UvrABC repair system catalyzes the recognition and processing of DNA lesions. A damage recognition complex composed of 2 UvrA and 2 UvrB subunits scans DNA for abnormalities. Upon binding of the UvrA(2)B(2) complex to a putative damaged site, the DNA wraps around one UvrB monomer. DNA wrap is dependent on ATP binding by UvrB and probably causes local melting of the DNA helix, facilitating insertion of UvrB beta-hairpin between the DNA strands. Then UvrB probes one DNA strand for the presence of a lesion. If a lesion is found the UvrA subunits dissociate and the UvrB-DNA preincision complex is formed. This complex is subsequently bound by UvrC and the second UvrB is released. If no lesion is found, the DNA wraps around the other UvrB subunit that will check the other stand for damage. The protein is UvrABC system protein B of Corynebacterium diphtheriae (strain ATCC 700971 / NCTC 13129 / Biotype gravis).